Reading from the N-terminus, the 576-residue chain is Acetylcholine receptor subunit alpha-like 2 (576 aa).

Residues 1–21 (MAPGCCTTRPRPIALLAHIWR) form the signal peptide. The Extracellular portion of the chain corresponds to 22–261 (HCKPLCLLLV…FFNITLRRKT (240 aa)). N-linked (GlcNAc...) asparagine glycosylation is present at N65. 2 disulfides stabilise this stretch: C169-C183 and C243-C244. N254 is a glycosylation site (N-linked (GlcNAc...) asparagine). Transmembrane regions (helical) follow at residues 262-285 (LFYT…VFYL), 293-311 (IALC…LLIS), and 327-346 (YLLF…IIIL). Over 347-526 (NIHYRKPSTH…WGFVAMVMDR (180 aa)) the chain is Cytoplasmic. A helical membrane pass occupies residues 527–545 (LFLWLFMIASLVGTFVILG). N-linked (GlcNAc...) asparagine glycosylation is present at N570.

The protein belongs to the ligand-gated ion channel (TC 1.A.9) family. Acetylcholine receptor (TC 1.A.9.1) subfamily. CNS in embryos.

Its subcellular location is the postsynaptic cell membrane. The protein localises to the cell membrane. Its function is as follows. After binding acetylcholine, the AChR responds by an extensive change in conformation that affects all subunits and leads to opening of an ion-conducting channel across the plasma membrane. This Drosophila melanogaster (Fruit fly) protein is Acetylcholine receptor subunit alpha-like 2 (nAChRalpha2).